The following is a 957-amino-acid chain: Glutamyl aminopeptidase (957 aa).

Residues 1–18 (MNFAEREGSKRYCIQTKH) are Cytoplasmic-facing. A helical; Signal-anchor for type II membrane protein membrane pass occupies residues 19–39 (VAILCAVVVGVGLIVGLAVGL). Residues 40 to 957 (TRSCDSSGDG…EWFFNLLESG (918 aa)) lie on the Extracellular side of the membrane. Residues 44–83 (DSSGDGGPGTAPAPSHLPSSTASPSGPPAQDQDICPASED) form a disordered region. N98 carries an N-linked (GlcNAc...) asparagine; atypical glycan. Residues N124 and N197 are each glycosylated (N-linked (GlcNAc...) asparagine). E223 contributes to the substrate binding site. N-linked (GlcNAc...) asparagine glycosylation is found at N324 and N340. Position 357–361 (357–361 (GAMEN)) interacts with substrate. Zn(2+) is bound at residue H393. E394 functions as the Proton acceptor in the catalytic mechanism. Positions 397 and 416 each coordinate Zn(2+). N554, N589, N597, N607, N678, N763, N773, N801, and N828 each carry an N-linked (GlcNAc...) asparagine glycan. A substrate-binding site is contributed by R887.

It belongs to the peptidase M1 family. As to quaternary structure, homodimer; disulfide-linked. The cofactor is Zn(2+). As to expression, expressed in choriocarcinoma cancer cell lines (at protein level). Expressed by epithelial cells of the proximal tubule cells and the glomerulus of the nephron. Also found in a variety of other tissues.

The protein resides in the cell membrane. The enzyme catalyses Release of N-terminal glutamate (and to a lesser extent aspartate) from a peptide.. Substrate specificity is modulated by calcium which enhances the enzymatic activity for cleavage of acidic residues while reducing its activity with basic residues. Inhibited by aminopeptidase inhibitors amastatin and bestatin. Regulates central hypertension through its calcium-modulated preference to cleave N-terminal acidic residues from peptides such as angiotensin II. This Homo sapiens (Human) protein is Glutamyl aminopeptidase (ENPEP).